The primary structure comprises 824 residues: Vesicle-fusing ATPase (824 aa).

Residues 582–587 (RGMIVW) and 622–629 (AKTGKTSL) each bind ATP. T627 is a binding site for Mg(2+).

It belongs to the AAA ATPase family. As to quaternary structure, homohexamer. The cofactor is Mg(2+).

The protein localises to the cytoplasm. It carries out the reaction ATP + H2O = ADP + phosphate + H(+). Required for vesicle-mediated transport. Catalyzes the fusion of transport vesicles within the Golgi cisternae. Is also required for transport from the endoplasmic reticulum to the Golgi stack. Seems to function as a fusion protein required for the delivery of cargo proteins to all compartments of the Golgi stack independent of vesicle origin. The protein is Vesicle-fusing ATPase (nsf-1) of Caenorhabditis elegans.